A 442-amino-acid chain; its full sequence is Phosphatidylserine synthase 2 (442 aa).

Residues 1–40 (MRRGERRGPAGPLGDGPALGLRRSTESEVYDDGTNTFFWR) lie on the Cytoplasmic side of the membrane. Residues 41 to 61 (AHTLTVLFILTCALGYVTLLE) traverse the membrane as a helical segment. The Lumenal segment spans residues 62 to 74 (ETPQDTAYNTKRG). A helical transmembrane segment spans residues 75–95 (IVASILVFLCFGVTQAKDGPF). The Cytoplasmic portion of the chain corresponds to 96–104 (SRPHPAYWR). A helical membrane pass occupies residues 105–125 (FWLCVSVVYELFLIFILFQTV). Residues 126-291 (QDGRQFMKYI…EWKPASSLRR (166 aa)) lie on the Lumenal side of the membrane. N-linked (GlcNAc...) asparagine glycans are attached at residues Asn-159 and Asn-215. The chain crosses the membrane as a helical span at residues 292 to 312 (WLAVCGIIFVFLLAELNTFYL). Position 313 (Lys-313) is a topological domain, cytoplasmic. A helical membrane pass occupies residues 314 to 334 (FVLWMPPEHYLVLLRLVFFVN). Residues 335-354 (VGGVAMREIYDFMDDPKFHK) are Lumenal-facing. A helical membrane pass occupies residues 355–375 (KLGQQAWLVAAITATEFLIVV). The Cytoplasmic segment spans residues 376 to 381 (KYDPYT). Residues 382–402 (LTLSLPFYITQCWILGIILVL) form a helical membrane-spanning segment. The Lumenal segment spans residues 403 to 442 (TWTAWRFFIRDITLRYKEIRRQKQEHKYEKDKCLSNGDGH).

This sequence belongs to the phosphatidyl serine synthase family.

It localises to the endoplasmic reticulum membrane. It catalyses the reaction a 1,2-diacyl-sn-glycero-3-phosphoethanolamine + L-serine = a 1,2-diacyl-sn-glycero-3-phospho-L-serine + ethanolamine. It carries out the reaction 1-hexadecanoyl-2-(9Z-octadecenoyl)-sn-glycero-3-phosphoethanolamine + L-serine = 1-hexadecanoyl-2-(9Z-octadecenoyl)-sn-glycero-3-phospho-L-serine + ethanolamine. The enzyme catalyses 1-hexadecanoyl-2-(4Z,7Z,10Z,13Z,16Z,19Z-docosahexaenoyl)-sn-glycero-3-phosphoethanolamine + L-serine = 1-hexadecanoyl-2-(4Z,7Z,10Z,13Z,16Z,19Z-docosahexaenoyl)-sn-glycero-3-phosphoserine + ethanolamine. The catalysed reaction is 1-octadecanoyl-2-(5Z,8Z,11Z,14Z)-eicosatetraenoyl-sn-glycero-3-phosphoethanolamine + L-serine = 1-octadecanoyl-2-(5Z,8Z,11Z,14Z)-eicosatetraenoyl-sn-glycero-3-phosphoserine + ethanolamine. It catalyses the reaction 1-octadecanoyl-2-(4Z,7Z,10Z,13Z,16Z,19Z-docosahexaenoyl)-sn-glycero-3-phosphoethanolamine + L-serine = 1-octadecanoyl-2-(4Z,7Z,10Z,13Z,16Z,19Z-docosahexaenoyl)-sn-glycero-3-phosphoserine + ethanolamine. It carries out the reaction 1-(1Z-octadecenyl)-2-(4Z,7Z,10Z,13Z,16Z,19Z-docosahexaenoyl)-sn-glycero-3-phosphoethanolamine + L-serine = 1-(1Z-octadecenyl)-2-(4Z,7Z,10Z,13Z,16Z,19Z-docosahexaenoyl)-sn-glycero-3-phospho-L-serine + ethanolamine. The enzyme catalyses 1-octadecanoyl-2-(9Z-octadecenoyl)-sn-glycero-3-phosphoethanolamine + L-serine = 1-octadecanoyl-2-(9Z-octadecenoyl)-sn-glycero-3-phospho-L-serine + ethanolamine. The catalysed reaction is 1-(1Z-octadecenyl)-2-(9Z-octadecenoyl)-sn-glycero-3-phosphoethanolamine + L-serine = 1-(1Z-octadecenyl)-2-(9Z-octadecenoyl)-sn-glycero-3-phospho-L-serine + ethanolamine. It catalyses the reaction 1-(1Z-octadecenyl)-2-(5Z,8Z,11Z,14Z- eicosatetraenoyl)-sn-glycero-3-phosphoethanolamine + L-serine = 1-(1Z-octadecenyl)-2-(5Z,8Z,11Z,14Z-eicosatetraenoyl)-sn-glycero-3-phospho-L-serine + ethanolamine. It functions in the pathway phospholipid metabolism; phosphatidylserine biosynthesis. Its function is as follows. Catalyzes a base-exchange reaction in which the polar head group of phosphatidylethanolamine (PE) or phosphatidylcholine (PC) is replaced by L-serine. Catalyzes the conversion of phosphatatidylethanolamine and does not act on phosphatidylcholine. Can utilize both phosphatidylethanolamine (PE) plasmalogen and diacyl PE as substrate and the latter is six times better utilized, indicating the importance of an ester linkage at the sn-1 position. Although it shows no sn-1 fatty acyl preference, exhibits significant preference towards docosahexaenoic acid (22:6n-3) compared with 18:1 or 20:4 at the sn-2 position. The chain is Phosphatidylserine synthase 2 (PTDSS1) from Gallus gallus (Chicken).